A 363-amino-acid polypeptide reads, in one-letter code: Type-2 angiotensin II receptor (363 aa).

The Extracellular portion of the chain corresponds to M1 to E45. N-linked (GlcNAc...) asparagine glycosylation is found at N4, N13, N24, and N34. 2 cysteine pairs are disulfide-bonded: C35-C290 and C117-C195. Residues A46–C70 form a helical membrane-spanning segment. At C71–S80 the chain is on the cytoplasmic side. The chain crosses the membrane as a helical span at residues I81 to Y104. Angiotensin II contacts are provided by Y103 and Y104. Over S105–P114 the chain is Extracellular. A helical transmembrane segment spans residues V115–V140. Over D141 to Q159 the chain is Cytoplasmic. A helical membrane pass occupies residues A160–F181. The angiotensin II site is built by R182, Y204, and K215. Topologically, residues R182–Q206 are extracellular. Residues W207–F232 form a helical membrane-spanning segment. The Cytoplasmic segment spans residues G233 to M257. A helical transmembrane segment spans residues A258–L281. Angiotensin II is bound at residue D279. Topologically, residues S282 to A294 are extracellular. A helical transmembrane segment spans residues V295–F320. Position 297 (D297) interacts with angiotensin II. The Cytoplasmic portion of the chain corresponds to V321–S363. Positions R324–F333 are helix VIII. A Phosphoserine; by PKC modification is found at S354.

The protein belongs to the G-protein coupled receptor 1 family. As to quaternary structure, interacts with MTUS1.

The protein localises to the cell membrane. Its function is as follows. Receptor for angiotensin II, a vasoconstricting peptide. Signals primarily via a non-canonical G-protein- and beta-arrestin independent pathways. Cooperates with MTUS1 to inhibit ERK2 activation and cell proliferation. In Meriones unguiculatus (Mongolian jird), this protein is Type-2 angiotensin II receptor (AGTR2).